The chain runs to 683 residues: Cytoskeleton-associated protein 2 (683 aa).

2 disordered regions span residues 1–28 and 153–175; these read MSTP…QRRQ and NSKK…KKPV. S178 and S190 each carry phosphoserine. 2 disordered regions span residues 214-236 and 336-403; these read KATK…SSNM and EKSE…EKPV. A compositionally biased stretch (polar residues) spans 219 to 236; it reads QPVNTSSVTVKSNRSSNM. Basic and acidic residues-rich tracts occupy residues 336 to 345 and 362 to 376; these read EKSEPVDQRR and ETSE…EWKA. Residue S534 is modified to Phosphoserine. T579 and T582 each carry phosphothreonine. Residue S595 is modified to Phosphoserine. T596 and T597 each carry phosphothreonine. A Phosphotyrosine modification is found at Y599. The residue at position 602 (S602) is a Phosphoserine.

Belongs to the CKAP2 family. In terms of assembly, associates with alpha- and beta-tubulins. Abundant in testis, thymus, and in tumor derived cell lines, while barely detectable in liver, prostate, and kidney.

It localises to the cytoplasm. It is found in the cytoskeleton. The protein resides in the spindle. Its subcellular location is the spindle pole. In terms of biological role, possesses microtubule stabilizing properties. Involved in regulating aneuploidy, cell cycling, and cell death in a p53/TP53-dependent manner. In Homo sapiens (Human), this protein is Cytoskeleton-associated protein 2.